Here is a 905-residue protein sequence, read N- to C-terminus: Phosphatidylethanolamine N-methyltransferase (905 aa).

2 stretches are compositionally biased toward polar residues: residues 1–22 (MTNQ…STSV) and 40–58 (DSNG…SSLN). Residues 1–73 (MTNQIPSASS…SEPERYGCTP (73 aa)) are disordered. Residues 1–104 (MTNQIPSASS…DPRFSKTPWD (104 aa)) lie on the Lumenal side of the membrane. The chain crosses the membrane as a helical span at residues 105-125 (WIVISSILAQVLLFFMTTGAV). At 126-128 (RRY) the chain is on the cytoplasmic side. Residues 129-149 (SMMLCFFFWRISYDAGIGFLL) traverse the membrane as a helical segment. Over 150 to 209 (HMQSNHRKVVTWISDFGFFDKENHPKLYDLTKKQLISKMDSSYNYDTSPLEFNSWLVFRH) the chain is Lumenal. A helical transmembrane segment spans residues 210-230 (FVDLILMCDFCSYILMGLAWT). The Cytoplasmic segment spans residues 231-236 (CWPKVN). A helical transmembrane segment spans residues 237-257 (IILQFLRIFGGIALIVFNYWV). Residues 258-268 (KMDAHRVVRDY) are Lumenal-facing. Residues 269 to 289 (AWYWGDFFFLLRSSLVFNGVF) form a helical membrane-spanning segment. The Cytoplasmic portion of the chain corresponds to 290–313 (ELAPHPMYSVGYAGYYGMSLLTGS). A helical membrane pass occupies residues 314–334 (YAVLFASILAHAAQFGFLLFV). The Lumenal portion of the chain corresponds to 335–379 (ENPHIERTYGTDINHARLSPRGEDNEFELPPEHDLVGFVNFDFTR). Ser-353 is subject to Phosphoserine. The helical transmembrane segment at 380–400 (ISDVALLIIALYSIFIILLSS) threads the bilayer. The Cytoplasmic portion of the chain corresponds to 401 to 408 (NSHYSQFW). The helical transmembrane segment at 409–429 (AIFQAFVWRFLHSIIHAFILF) threads the bilayer. The Lumenal segment spans residues 430 to 456 (YQSKSKAWTKHFIRNGESAAYAWSQWK). A helical transmembrane segment spans residues 457–479 (GLYNLTLNMSYISFVMAAWKLYH). Residues 480–493 (LPSNWTYGLVSLRH) lie on the Cytoplasmic side of the membrane. Residues 494–514 (ALGFGLIALHIYTSVSIYEDL) traverse the membrane as a helical segment. Over 515–552 (GQYGWFYGDFFLPSRSPKLVYQGIYRYVNNPERFLGCS) the chain is Lumenal. The helical transmembrane segment at 553–573 (AYWGLALISSSAWIFLIAILA) threads the bilayer. Residues 574 to 905 (QLSNLAIIRL…FDGPSGAKDD (332 aa)) lie on the Cytoplasmic side of the membrane.

Belongs to the class VI-like SAM-binding methyltransferase superfamily. CHO2 family.

The protein localises to the endoplasmic reticulum membrane. It carries out the reaction a 1,2-diacyl-sn-glycero-3-phosphoethanolamine + S-adenosyl-L-methionine = a 1,2-diacyl-sn-glycero-3-phospho-N-methylethanolamine + S-adenosyl-L-homocysteine + H(+). Its pathway is phospholipid metabolism; phosphatidylcholine biosynthesis. In terms of biological role, catalyzes the first step of the methylation pathway of phosphatidylcholine biosynthesis, the SAM-dependent methylation of phosphatidylethanolamine (PE) to phosphatidylmonomethylethanolamine (PMME). The protein is Phosphatidylethanolamine N-methyltransferase of Schizosaccharomyces pombe (strain 972 / ATCC 24843) (Fission yeast).